The primary structure comprises 48 residues: M-oxotoxin-Ot1b (48 aa).

The protein localises to the secreted. Its subcellular location is the target cell membrane. In terms of biological role, disrupts cell membranes, particularly those rich in phosphocholine, through formation of pores. Has antimicrobial activity, hemolytic activity and insecticidal activity. This chain is M-oxotoxin-Ot1b, found in Oxyopes takobius (Lynx spider).